Consider the following 475-residue polypeptide: Aspartyl/glutamyl-tRNA(Asn/Gln) amidotransferase subunit B (475 aa).

It belongs to the GatB/GatE family. GatB subfamily. In terms of assembly, heterotrimer of A, B and C subunits.

It catalyses the reaction L-glutamyl-tRNA(Gln) + L-glutamine + ATP + H2O = L-glutaminyl-tRNA(Gln) + L-glutamate + ADP + phosphate + H(+). The catalysed reaction is L-aspartyl-tRNA(Asn) + L-glutamine + ATP + H2O = L-asparaginyl-tRNA(Asn) + L-glutamate + ADP + phosphate + 2 H(+). Its function is as follows. Allows the formation of correctly charged Asn-tRNA(Asn) or Gln-tRNA(Gln) through the transamidation of misacylated Asp-tRNA(Asn) or Glu-tRNA(Gln) in organisms which lack either or both of asparaginyl-tRNA or glutaminyl-tRNA synthetases. The reaction takes place in the presence of glutamine and ATP through an activated phospho-Asp-tRNA(Asn) or phospho-Glu-tRNA(Gln). The protein is Aspartyl/glutamyl-tRNA(Asn/Gln) amidotransferase subunit B of Agathobacter rectalis (strain ATCC 33656 / DSM 3377 / JCM 17463 / KCTC 5835 / VPI 0990) (Eubacterium rectale).